The primary structure comprises 24 residues: Transaldolase (24 aa).

This sequence belongs to the transaldolase family.

It localises to the cytoplasm. The enzyme catalyses D-sedoheptulose 7-phosphate + D-glyceraldehyde 3-phosphate = D-erythrose 4-phosphate + beta-D-fructose 6-phosphate. It functions in the pathway carbohydrate degradation; pentose phosphate pathway; D-glyceraldehyde 3-phosphate and beta-D-fructose 6-phosphate from D-ribose 5-phosphate and D-xylulose 5-phosphate (non-oxidative stage): step 2/3. In terms of biological role, transaldolase is important for the balance of metabolites in the pentose-phosphate pathway. The polypeptide is Transaldolase (Capsicum annuum var. annuum (Red pepper)).